The primary structure comprises 287 residues: Shikimate dehydrogenase (NADP(+)) (287 aa).

Shikimate contacts are provided by residues 18–20 and threonine 66; that span reads SYS. The active-site Proton acceptor is the lysine 70. Glutamate 82 contributes to the NADP(+) binding site. 2 residues coordinate shikimate: asparagine 91 and aspartate 106. NADP(+)-binding positions include 130–134 and methionine 228; that span reads GSGGA. A shikimate-binding site is contributed by tyrosine 230. An NADP(+)-binding site is contributed by glycine 251.

Belongs to the shikimate dehydrogenase family. Homodimer.

The catalysed reaction is shikimate + NADP(+) = 3-dehydroshikimate + NADPH + H(+). It participates in metabolic intermediate biosynthesis; chorismate biosynthesis; chorismate from D-erythrose 4-phosphate and phosphoenolpyruvate: step 4/7. Involved in the biosynthesis of the chorismate, which leads to the biosynthesis of aromatic amino acids. Catalyzes the reversible NADPH linked reduction of 3-dehydroshikimate (DHSA) to yield shikimate (SA). This chain is Shikimate dehydrogenase (NADP(+)), found in Chlorobium chlorochromatii (strain CaD3).